The primary structure comprises 544 residues: Neurofilament light polypeptide (544 aa).

Position 2 is an N-acetylserine (Ser-2). The interval Ser-2–Gln-87 is head. The IF rod domain occupies Glu-84 to Leu-394. The coil 1A stretch occupies residues Leu-88 to Leu-119. Residues Arg-120–Met-132 form a linker 1 region. The segment at Tyr-133–Leu-228 is coil 1B. The segment at Gln-229 to Pro-246 is linker 12. The interval Asp-247–Lys-265 is coil 2A. The linker 2 stretch occupies residues Asn-266–Phe-274. A coil 2B region spans residues Lys-275–Glu-390. A tail, subdomain A region spans residues Glu-391–Tyr-435. The interval Glu-391 to Lys-544 is tail. The interval Ser-436–Lys-544 is tail, subdomain B (acidic). The interval Ile-450–Lys-544 is disordered. A compositionally biased stretch (basic and acidic residues) spans Glu-451–Ala-462. Residues Pro-463–Gly-525 are compositionally biased toward acidic residues. Positions Glu-526–Lys-544 are enriched in basic and acidic residues.

It belongs to the intermediate filament family. Forms homodimers (in vitro).

Its subcellular location is the cell projection. It localises to the axon. The protein localises to the cytoplasm. The protein resides in the cytoskeleton. Its function is as follows. Neurofilaments usually contain three intermediate filament proteins: NEFL, NEFM, and NEFH which are involved in the maintenance of neuronal caliber. May additionally cooperate with other neuronal intermediate filament proteins to form neuronal filamentous networks. The protein is Neurofilament light polypeptide (nefl) of Xenopus laevis (African clawed frog).